A 58-amino-acid chain; its full sequence is UPF0434 protein Sfri_2386 (58 aa).

Belongs to the UPF0434 family.

This is UPF0434 protein Sfri_2386 from Shewanella frigidimarina (strain NCIMB 400).